The sequence spans 245 residues: MASSSGLRSCSAVGVPSLLAPSSRSGRSGLPFCAYATTSGRVTMSAEWFPGQPRPAHLDGSSPGDFGFDPLGLATVPENFERFKESEIYHCRWAMLCVPGVLVPEALGLGNWVKAQEWAALPDGQATYLGNPVPWGNLPTILAIEFLAIAFAEQQRTMEKDPEKKKYPGGAFDPLGFSKDPAKFEELKLKEIKNGRLAMLAFVGFCVQQSAYPGTGPLENLATHLADPWHNNIGDIVIPRNIYGP.

A chloroplast-targeting transit peptide spans 1–44; it reads MASSSGLRSCSAVGVPSLLAPSSRSGRSGLPFCAYATTSGRVTM. Residue Trp-48 participates in chlorophyll b binding. 3 residues coordinate chlorophyll a: Phe-68, Glu-87, and His-90. Arg-92 provides a ligand contact to chlorophyll b. A helical transmembrane segment spans residues 93–113; the sequence is WAMLCVPGVLVPEALGLGNWV. Leu-129 provides a ligand contact to chlorophyll a. A helical membrane pass occupies residues 132 to 152; sequence PVPWGNLPTILAIEFLAIAFA. Val-133, Glu-153, and Arg-156 together coordinate chlorophyll b. The chlorophyll a site is built by Lys-190, Glu-191, Asn-194, Arg-196, Gln-208, and His-224.

It belongs to the light-harvesting chlorophyll a/b-binding (LHC) protein family. In terms of assembly, the LHC complex consists of chlorophyll a-b binding proteins. Requires Binds at least 14 chlorophylls (8 Chl-a and 6 Chl-b) and carotenoids such as lutein and neoxanthin. as cofactor. In terms of processing, photoregulated by reversible phosphorylation of its threonine residues.

The protein resides in the plastid. The protein localises to the chloroplast thylakoid membrane. In terms of biological role, the light-harvesting complex (LHC) functions as a light receptor, it captures and delivers excitation energy to photosystems with which it is closely associated. The chain is Chlorophyll a-b binding protein 1B-21, chloroplastic (LHC Ib-21) from Hordeum vulgare (Barley).